Reading from the N-terminus, the 65-residue chain is Large ribosomal subunit protein bL35 (65 aa).

The segment at 1-26 (MPKIKTVRGAAKRFKKTASGGFKRKQ) is disordered. Basic residues predominate over residues 10–26 (AAKRFKKTASGGFKRKQ).

The protein belongs to the bacterial ribosomal protein bL35 family.

The polypeptide is Large ribosomal subunit protein bL35 (Actinobacillus pleuropneumoniae serotype 7 (strain AP76)).